The following is a 33-amino-acid chain: MSDIN-like toxin proprotein 1 (33 aa).

A propeptide spanning residues 1–10 (MSDINATRLP) is cleaved from the precursor. Residues 11 to 18 (IIWAPVVP) constitute a cross-link (cyclopeptide (Ile-Pro)). Residues 19–33 (CISDDNDSTLTRGQR) constitute a propeptide that is removed on maturation.

The protein belongs to the MSDIN fungal toxin family. Processed by the macrocyclase-peptidase enzyme POPB to yield a toxic cyclic octapeptide. POPB first removes 10 residues from the N-terminus. Conformational trapping of the remaining peptide forces the enzyme to release this intermediate rather than proceed to macrocyclization. The enzyme rebinds the remaining peptide in a different conformation and catalyzes macrocyclization of the N-terminal 8 residues.

Functionally, probable toxin that belongs to the MSDIN-like toxin family responsible for a large number of food poisoning cases and deaths. This chain is MSDIN-like toxin proprotein 1, found in Amanita fuliginea (East Asian brown death cap).